A 473-amino-acid chain; its full sequence is ATP synthase subunit beta (473 aa).

158 to 165 (GGAGVGKT) provides a ligand contact to ATP.

The protein belongs to the ATPase alpha/beta chains family. In terms of assembly, F-type ATPases have 2 components, CF(1) - the catalytic core - and CF(0) - the membrane proton channel. CF(1) has five subunits: alpha(3), beta(3), gamma(1), delta(1), epsilon(1). CF(0) has three main subunits: a(1), b(2) and c(9-12). The alpha and beta chains form an alternating ring which encloses part of the gamma chain. CF(1) is attached to CF(0) by a central stalk formed by the gamma and epsilon chains, while a peripheral stalk is formed by the delta and b chains.

Its subcellular location is the cell membrane. It carries out the reaction ATP + H2O + 4 H(+)(in) = ADP + phosphate + 5 H(+)(out). Produces ATP from ADP in the presence of a proton gradient across the membrane. The catalytic sites are hosted primarily by the beta subunits. The sequence is that of ATP synthase subunit beta from Geobacillus thermoleovorans (Bacillus thermoleovorans).